Here is a 342-residue protein sequence, read N- to C-terminus: Tetraacyldisaccharide 4'-kinase (342 aa).

68–75 (TVGGTGKT) lines the ATP pocket.

It belongs to the LpxK family.

The catalysed reaction is a lipid A disaccharide + ATP = a lipid IVA + ADP + H(+). It participates in glycolipid biosynthesis; lipid IV(A) biosynthesis; lipid IV(A) from (3R)-3-hydroxytetradecanoyl-[acyl-carrier-protein] and UDP-N-acetyl-alpha-D-glucosamine: step 6/6. Transfers the gamma-phosphate of ATP to the 4'-position of a tetraacyldisaccharide 1-phosphate intermediate (termed DS-1-P) to form tetraacyldisaccharide 1,4'-bis-phosphate (lipid IVA). The protein is Tetraacyldisaccharide 4'-kinase of Burkholderia ambifaria (strain ATCC BAA-244 / DSM 16087 / CCUG 44356 / LMG 19182 / AMMD) (Burkholderia cepacia (strain AMMD)).